The following is a 571-amino-acid chain: Coenzyme A biosynthesis protein 3 (571 aa).

Disordered regions lie at residues 1-72 (MTDE…YKND) and 100-120 (INTS…PSLP). A compositionally biased stretch (polar residues) spans 8–35 (SDQNMNGKQGVNLISSLPTTQVPVSILT). Serine 42 is modified (phosphoserine). Over residues 43–59 (IHDESNFERSDSHEDQS) the composition is skewed to basic and acidic residues. Over residues 60–72 (KSNSNRRNIYKND) the composition is skewed to polar residues. Serine 116, serine 121, and serine 124 each carry phosphoserine. Disordered regions lie at residues 140–171 (ISNK…LQEQ) and 209–244 (IFKE…SMEK). The span at 146-171 (KQQQQQEQLQQNQQQEEQQKAQLQEQ) shows a compositional bias: low complexity. At serine 264 the chain carries Phosphoserine. The interval 507-571 (RDEETGDKEQ…EDEEDVKTEV (65 aa)) is disordered. Positions 516 to 571 (QEQEEQEGADNEDDDDEDDEEDEEDEEEEEALNETASDESNDEEDEEDEEDVKTEV) are enriched in acidic residues.

The protein belongs to the HFCD (homooligomeric flavin containing Cys decarboxylase) superfamily. As to quaternary structure, component of the phosphopantothenoylcysteine decarboxylase (PPCDC) complex, a heterotrimer composed of CAB3, HAL3 and VHS3.

It is found in the cytoplasm. Functionally, component of the phosphopantothenoylcysteine decarboxylase (PPCDC) involved in the coenzyme A synthesis. In Saccharomyces cerevisiae (strain ATCC 204508 / S288c) (Baker's yeast), this protein is Coenzyme A biosynthesis protein 3 (CAB3).